The chain runs to 101 residues: Large ribosomal subunit protein eL21 (101 aa).

Positions 1–18 (MVKHSKGYRTRSRSLLRK) are enriched in basic residues. Residues 1-24 (MVKHSKGYRTRSRSLLRKSPRERG) form a disordered region.

Belongs to the eukaryotic ribosomal protein eL21 family.

The protein is Large ribosomal subunit protein eL21 (rpl21e) of Saccharolobus solfataricus (strain ATCC 35092 / DSM 1617 / JCM 11322 / P2) (Sulfolobus solfataricus).